The sequence spans 252 residues: Small ribosomal subunit protein eS1B (252 aa).

Alanine 2 is modified (N-acetylalanine; partial). A Phosphoserine modification is found at serine 251.

This sequence belongs to the eukaryotic ribosomal protein eS1 family. In terms of assembly, component of the small ribosomal subunit (SSU). Mature yeast ribosomes consist of a small (40S) and a large (60S) subunit. The 40S small subunit contains 1 molecule of ribosomal RNA (18S rRNA) and at least 33 different proteins. The large 60S subunit contains 3 rRNA molecules (25S, 5.8S and 5S rRNA) and at least 46 different proteins. eS1 interacts directly with uS11 and eS26, which form part of the mRNA exit tunnel.

It is found in the cytoplasm. Component of the ribosome, a large ribonucleoprotein complex responsible for the synthesis of proteins in the cell. The small ribosomal subunit (SSU) binds messenger RNAs (mRNAs) and translates the encoded message by selecting cognate aminoacyl-transfer RNA (tRNA) molecules. The large subunit (LSU) contains the ribosomal catalytic site termed the peptidyl transferase center (PTC), which catalyzes the formation of peptide bonds, thereby polymerizing the amino acids delivered by tRNAs into a polypeptide chain. The nascent polypeptides leave the ribosome through a tunnel in the LSU and interact with protein factors that function in enzymatic processing, targeting, and the membrane insertion of nascent chains at the exit of the ribosomal tunnel. In Schizosaccharomyces pombe (strain 972 / ATCC 24843) (Fission yeast), this protein is Small ribosomal subunit protein eS1B (rps102).